The chain runs to 335 residues: Methyltransferase pgmE (335 aa).

Belongs to the methyltransferase superfamily.

Its pathway is pigment biosynthesis. The protein operates within secondary metabolite biosynthesis. Methyltransferase; part of the gene cluster that mediates the biosynthesis of pleosporalin A, ascomycone A, as well as a third cryptic naphthoquinone derived pigment, all responsible for the coloration of conidia. Essential for the production of pleosporalin A, but not the 2 other final products. The pathway begins with the biosynthesis of the cyclized heptaketide 3-acetonyl-1,6,8-trihydroxy-2-naphthaldehyde by the NR-PKS pgmA. The C-6 hydroxyl group is further methylated by the O-methyltransferase pgmB to yield fusarubinaldehyde which is in turn oxidized by the cytochrome P450 monooxygenase pgmC at C-9. The C-1 hydroxyl group is then methylated spontaneously. Although pgmE, pgmD and pgmH are essential for the production of pleosporalin A, it is not the case for the 2 other final products and it remains difficult to assign a specific function to each enzyme. PgmF and pgmG seem not to be involved in pigment biosynthesis although they were regulated by the cluster-specific transcription factor pgmR. The chain is Methyltransferase pgmE from Aspergillus terreus.